The primary structure comprises 611 residues: MFS siderochrome iron transporter C (611 aa).

The interval Met1–Glu25 is disordered. N-linked (GlcNAc...) asparagine glycosylation is present at Asn62. 14 helical membrane-spanning segments follow: residues Val71 to Val91, Leu107 to Ala127, Phe136 to Ser156, Ala165 to Ala185, Ala194 to Ile214, Tyr228 to Leu248, Met282 to Ala302, Ser313 to Ser333, Ala353 to Pro373, Val393 to Lys413, Tyr418 to Val438, Ile449 to Leu469, Met486 to Trp506, and Leu560 to Asp580. The disordered stretch occupies residues Val592–Thr611.

It belongs to the major facilitator superfamily.

The protein localises to the membrane. Functionally, major facilitator transporter that contributes to the maintenance of intracellular siderophore ferricrocin (FC) levels. Plays a role in conidiation and confers protection against oxidative stress. Also contributes to fungal virulence in the Galleria mellonella animal model system. Does not appear to play a role in either siderophore export or uptake. In Aspergillus fumigatus (strain ATCC MYA-4609 / CBS 101355 / FGSC A1100 / Af293) (Neosartorya fumigata), this protein is MFS siderochrome iron transporter C.